A 262-amino-acid chain; its full sequence is Acyl-[acyl-carrier-protein]--UDP-N-acetylglucosamine O-acyltransferase (262 aa).

Belongs to the transferase hexapeptide repeat family. LpxA subfamily. Homotrimer.

The protein localises to the cytoplasm. It catalyses the reaction a (3R)-hydroxyacyl-[ACP] + UDP-N-acetyl-alpha-D-glucosamine = a UDP-3-O-[(3R)-3-hydroxyacyl]-N-acetyl-alpha-D-glucosamine + holo-[ACP]. It functions in the pathway glycolipid biosynthesis; lipid IV(A) biosynthesis; lipid IV(A) from (3R)-3-hydroxytetradecanoyl-[acyl-carrier-protein] and UDP-N-acetyl-alpha-D-glucosamine: step 1/6. In terms of biological role, involved in the biosynthesis of lipid A, a phosphorylated glycolipid that anchors the lipopolysaccharide to the outer membrane of the cell. This chain is Acyl-[acyl-carrier-protein]--UDP-N-acetylglucosamine O-acyltransferase, found in Vibrio cholerae serotype O1 (strain ATCC 39541 / Classical Ogawa 395 / O395).